We begin with the raw amino-acid sequence, 165 residues long: Endoribonuclease YbeY (165 aa).

Residues His131, His135, and His141 each contribute to the Zn(2+) site.

The protein belongs to the endoribonuclease YbeY family. The cofactor is Zn(2+).

It localises to the cytoplasm. Single strand-specific metallo-endoribonuclease involved in late-stage 70S ribosome quality control and in maturation of the 3' terminus of the 16S rRNA. The sequence is that of Endoribonuclease YbeY from Lachnoclostridium phytofermentans (strain ATCC 700394 / DSM 18823 / ISDg) (Clostridium phytofermentans).